The following is a 431-amino-acid chain: DNA polymerase delta subunit 2 (431 aa).

Belongs to the DNA polymerase delta/II small subunit family. In terms of assembly, component of both the DNA polymerase delta and DNA polymerase zeta complexes. The DNA polymerase delta complex consisting of three subunits: the catalytic subunit PolD1 and two accessory subunits PolD2/Pol31 and PolD3/Pol32. Within the delta complex, interacts with both PolD1 and PolD3, and is able to interact with PolD1 in the absence of PolD3. Component of the DNA polymerase zeta complex consisting of four subunits: the catalytic subunit PolZ1 and three accessory subunits PolZ2/Rev7, PolD2/Pol31 and PolD3/Pol32. Expressed in ovaries and embryos (at the protein level).

Its subcellular location is the nucleus. It is found in the nucleoplasm. In terms of biological role, accessory component of both the DNA polymerase delta complex and possibly the DNA polymerase zeta complex. As a component of the delta complex, participates in high fidelity genome replication, including lagging strand synthesis, DNA recombination and repair. Appears to promote the function of the DNA pol-delta complex accessory subunit PolD3 in both embryonic and postembryonic somatic cells. This Drosophila melanogaster (Fruit fly) protein is DNA polymerase delta subunit 2.